Reading from the N-terminus, the 567-residue chain is Wee1-like protein kinase 2 (567 aa).

4 stretches are compositionally biased toward basic and acidic residues: residues 1 to 12 (MDDKDIDKELRQ), 25 to 35 (EGQKKVEESRE), 42 to 51 (EKGEVQDSEA), and 64 to 77 (HELD…KESP). The disordered stretch occupies residues 1–117 (MDDKDIDKEL…DSPSTPKTML (117 aa)). Serine 76 carries the phosphoserine modification. The short motif at 173–175 (KRK) is the Nuclear localization signal element. In terms of domain architecture, Protein kinase spans 212–486 (FLEVEKIGVG…AAALARNTVL (275 aa)). ATP is bound by residues 218–226 (IGVGEFGTV) and lysine 241. The short motif at 315–329 (KLKDILLQISLGLNY) is the Nuclear export signal element. The active-site Proton acceptor is the aspartate 339. Mg(2+)-binding residues include asparagine 344 and aspartate 380. Residues 494-519 (EELQQQLNLEKFKTATLERELREAQQ) adopt a coiled-coil conformation. Positions 514 to 567 (LREAQQAQSPQGYTHHGDTGVSGTHTGSRSTKRLVGGKSARSSSFTSGEREPLH) are disordered.

The protein belongs to the protein kinase superfamily. Ser/Thr protein kinase family. WEE1 subfamily. Phosphorylated on serine residues. Phosphorylation leads to increase its activity. Expressed in oocytes (at protein level). May also be expressed in testis.

It localises to the nucleus. The catalysed reaction is L-tyrosyl-[protein] + ATP = O-phospho-L-tyrosyl-[protein] + ADP + H(+). Oocyte-specific protein tyrosine kinase that phosphorylates and inhibits CDK1/CDC2 and acts as a key regulator of meiosis during both prophase I and metaphase II. Required to maintain meiotic arrest in oocytes during the germinal vesicle (GV) stage, a long period of quiescence at dictyate prophase I, by phosphorylating CDK1 at 'Tyr-15', leading to inhibit CDK1 activity and prevent meiotic reentry. Also required for metaphase II exit during egg activation by phosphorylating CDK1 at 'Tyr-15', to ensure exit from meiosis in oocytes and promote pronuclear formation. The protein is Wee1-like protein kinase 2 (WEE2) of Homo sapiens (Human).